Consider the following 67-residue polypeptide: uncharacterized protein (67 aa).

It belongs to the flocculin family.

This is an uncharacterized protein from Saccharomyces cerevisiae (strain ATCC 204508 / S288c) (Baker's yeast).